Here is a 236-residue protein sequence, read N- to C-terminus: Phosphoribosylaminoimidazole-succinocarboxamide synthase (236 aa).

Belongs to the SAICAR synthetase family.

It catalyses the reaction 5-amino-1-(5-phospho-D-ribosyl)imidazole-4-carboxylate + L-aspartate + ATP = (2S)-2-[5-amino-1-(5-phospho-beta-D-ribosyl)imidazole-4-carboxamido]succinate + ADP + phosphate + 2 H(+). Its pathway is purine metabolism; IMP biosynthesis via de novo pathway; 5-amino-1-(5-phospho-D-ribosyl)imidazole-4-carboxamide from 5-amino-1-(5-phospho-D-ribosyl)imidazole-4-carboxylate: step 1/2. The chain is Phosphoribosylaminoimidazole-succinocarboxamide synthase from Pseudomonas paraeruginosa (strain DSM 24068 / PA7) (Pseudomonas aeruginosa (strain PA7)).